The primary structure comprises 1140 residues: Protein FAM184A (1140 aa).

3 coiled-coil regions span residues 57 to 256, 296 to 800, and 868 to 907; these read ALNT…NKAQ, AILR…IEME, and RITDLQEELRHREHHISELDKEVQHLHENISALTKELEFK. A disordered region spans residues 1063-1128; the sequence is PNLSALESGG…EASPVASPDP (66 aa).

It belongs to the FAM184 family.

The protein resides in the cytoplasm. It localises to the P-body. Its subcellular location is the cytoskeleton. The protein localises to the microtubule organizing center. It is found in the centrosome. The protein resides in the centriolar satellite. The sequence is that of Protein FAM184A from Homo sapiens (Human).